We begin with the raw amino-acid sequence, 368 residues long: Agmatine deiminase (368 aa).

Catalysis depends on Cys-357, which acts as the Amidino-cysteine intermediate.

The protein belongs to the agmatine deiminase family. Homodimer.

It carries out the reaction agmatine + H2O = N-carbamoylputrescine + NH4(+). Its pathway is amine and polyamine biosynthesis; putrescine biosynthesis via agmatine pathway; N-carbamoylputrescine from agmatine: step 1/1. Functionally, mediates the hydrolysis of agmatine into N-carbamoylputrescine in the arginine decarboxylase (ADC) pathway of putrescine biosynthesis, a basic polyamine. The protein is Agmatine deiminase of Pseudomonas syringae pv. tomato (strain ATCC BAA-871 / DC3000).